Reading from the N-terminus, the 331-residue chain is tRNA (guanine-N(7)-)-methyltransferase (331 aa).

S-adenosyl-L-methionine is bound by residues glutamate 29, glutamate 55, and aspartate 105. Aspartate 105 is a catalytic residue. Substrate contacts are provided by lysine 109 and aspartate 141.

This sequence belongs to the class I-like SAM-binding methyltransferase superfamily. TrmB family.

The enzyme catalyses guanosine(46) in tRNA + S-adenosyl-L-methionine = N(7)-methylguanosine(46) in tRNA + S-adenosyl-L-homocysteine. Its pathway is tRNA modification; N(7)-methylguanine-tRNA biosynthesis. In terms of biological role, catalyzes the formation of N(7)-methylguanine at position 46 (m7G46) in tRNA. The chain is tRNA (guanine-N(7)-)-methyltransferase from Deinococcus geothermalis (strain DSM 11300 / CIP 105573 / AG-3a).